The sequence spans 120 residues: uncharacterized protein (120 aa).

A helical membrane pass occupies residues 19 to 41; the sequence is YPELFITWCVMTYTFGVAGYMLG. The interval 57–78 is disordered; the sequence is SKNAHPWEDTKSSSGKSDESLD. Positions 61–75 are enriched in basic and acidic residues; it reads HPWEDTKSSSGKSDE.

The protein resides in the membrane. This is an uncharacterized protein from Schizosaccharomyces pombe (strain 972 / ATCC 24843) (Fission yeast).